Here is a 474-residue protein sequence, read N- to C-terminus: Homeobox protein PKNOX2 (474 aa).

Residues Met1–Ala42 form a disordered region. Over residues Asp26 to Ser38 the composition is skewed to polar residues. Positions Gly96–Asp179 constitute an MEIS N-terminal domain. Residues Lys291–Met350 constitute a DNA-binding region (homeobox). Disordered stretches follow at residues Leu351–Pro371, Leu385–Leu405, and Ala423–Glu474. The segment covering Lys361–Pro371 has biased composition (basic residues). Positions Leu429–Glu456 are enriched in acidic residues.

This sequence belongs to the TALE/MEIS homeobox family.

It localises to the nucleus. This chain is Homeobox protein PKNOX2 (Pknox2), found in Mus musculus (Mouse).